The chain runs to 240 residues: Probable transcriptional regulatory protein MS53_0373 (240 aa).

Belongs to the TACO1 family.

The protein localises to the cytoplasm. The chain is Probable transcriptional regulatory protein MS53_0373 from Mycoplasmopsis synoviae (strain 53) (Mycoplasma synoviae).